The sequence spans 748 residues: Catalase-peroxidase (748 aa).

The segment at residues 96–229 (WHSAGTYRVA…LAAAHMGLIY (134 aa)) is a cross-link (tryptophyl-tyrosyl-methioninium (Trp-Tyr) (with M-255)). Histidine 97 functions as the Proton acceptor in the catalytic mechanism. The segment at residues 229 to 255 (YVNPEGPDGNPDPIAAAKDIRTTFGRM) is a cross-link (tryptophyl-tyrosyl-methioninium (Tyr-Met) (with W-96)). Histidine 270 contributes to the heme b binding site.

The protein belongs to the peroxidase family. Peroxidase/catalase subfamily. As to quaternary structure, homodimer or homotetramer. Heme b is required as a cofactor. In terms of processing, formation of the three residue Trp-Tyr-Met cross-link is important for the catalase, but not the peroxidase activity of the enzyme.

The protein localises to the cytoplasm. It catalyses the reaction H2O2 + AH2 = A + 2 H2O. The enzyme catalyses 2 H2O2 = O2 + 2 H2O. Its function is as follows. Bifunctional enzyme with both catalase and broad-spectrum peroxidase activity. Plays a crucial role in oxidative stress response during infection. Acts as an antigen and elicits antibody response in P.marneffei-infected AIDS patients, healthy people working in mycological laboratory, and healthy people in an endemic area. This chain is Catalase-peroxidase, found in Talaromyces marneffei (Penicillium marneffei).